The chain runs to 190 residues: Cysteine dioxygenase (190 aa).

Positions 78, 80, and 132 each coordinate Fe cation. The 3'-(S-cysteinyl)-tyrosine (Cys-Tyr) cross-link spans 85-149; sequence CFVKILDGEL…SNGAVSLHLY (65 aa).

This sequence belongs to the cysteine dioxygenase family. Fe cation serves as cofactor. In terms of processing, the thioether cross-link between Cys-85 and Tyr-149 plays a structural role through stabilizing the Fe(2+) ion, and prevents the production of highly damaging free hydroxyl radicals by holding the oxygen radical via hydroxyl hydrogen.

It catalyses the reaction L-cysteine + O2 = 3-sulfino-L-alanine + H(+). Its pathway is organosulfur biosynthesis; taurine biosynthesis; hypotaurine from L-cysteine: step 1/2. The polypeptide is Cysteine dioxygenase (cdo-1) (Caenorhabditis briggsae).